Here is a 267-residue protein sequence, read N- to C-terminus: MRSSLTPLGPPVSRDRVIASFPKWYTPEACLQLREHFHGQVSAACQRRNTGTVGLKLSKVVVVGDLYVGKTSLIHRFCKNVFDRDYKATIGVDFEIERFEIAGIPYSLQIWDTAGQEKFKCIASAYYRGAQVIITAFDLTDVQTLEHTRQWLEDALRENEAGSCFIFLVGTKKDLLSGAACEQAEADAVHLAREMQAEYWSVSAKTGENVKAFFSRVAALAFEQSVLQDLERQSSARLQVGNGDLIQMEGSPPETQESKRPSSLGCC.

8 residues coordinate GTP: Val-68, Gly-69, Lys-70, Thr-71, Ser-72, Asp-83, Tyr-86, and Thr-89. Residue Thr-71 coordinates Mg(2+). The Switch 1 motif lies at Arg-76 to Phe-94. Mg(2+)-binding residues include Thr-89 and Asp-112. The short motif at Thr-113–Val-132 is the Switch 2 element. 6 residues coordinate GTP: Gly-115, Lys-172, Asp-174, Ser-203, Ala-204, and Lys-205. Residues Gly-243–Cys-267 form a disordered region. 2 S-geranylgeranyl cysteine lipidation sites follow: Cys-266 and Cys-267.

Belongs to the small GTPase superfamily. Rab family. Requires Mg(2+) as cofactor. In terms of tissue distribution, ubiquitously present in all tissues examined.

The protein resides in the golgi apparatus membrane. It catalyses the reaction GTP + H2O = GDP + phosphate + H(+). Its activity is regulated as follows. Regulated by guanine nucleotide exchange factors (GEFs) which promote the exchange of bound GDP for free GTP. Regulated by GTPase activating proteins (GAPs) which increase the GTP hydrolysis activity. Inhibited by GDP dissociation inhibitors (GDIs). In terms of biological role, the small GTPases Rab are key regulators of intracellular membrane trafficking, from the formation of transport vesicles to their fusion with membranes. Rabs cycle between an inactive GDP-bound form and an active GTP-bound form that is able to recruit to membranes different sets of downstream effectors directly responsible for vesicle formation, movement, tethering and fusion. The chain is Ras-related protein Rab-36 from Homo sapiens (Human).